Consider the following 258-residue polypeptide: Trans-aconitate 2-methyltransferase (258 aa).

It belongs to the methyltransferase superfamily. Tam family.

It localises to the cytoplasm. It carries out the reaction trans-aconitate + S-adenosyl-L-methionine = (E)-3-(methoxycarbonyl)pent-2-enedioate + S-adenosyl-L-homocysteine. Catalyzes the S-adenosylmethionine monomethyl esterification of trans-aconitate. This is Trans-aconitate 2-methyltransferase from Acidovorax sp. (strain JS42).